A 395-amino-acid chain; its full sequence is Flap endonuclease 1 (395 aa).

An N-domain region spans residues Met1–Ala108. Asp34 contributes to the Mg(2+) binding site. Position 74 (Arg74) interacts with DNA. Asp90 provides a ligand contact to Mg(2+). Positions Glu116–Arg136 are disordered. The interval Met126–Tyr257 is I-domain. Mg(2+) is bound by residues Glu162, Glu164, Asp183, and Asp185. Glu162 contributes to the DNA binding site. Gly235 and Asp237 together coordinate DNA. A Mg(2+)-binding site is contributed by Asp237. Residues Thr340 to Phe348 are interaction with PCNA.

The protein belongs to the XPG/RAD2 endonuclease family. FEN1 subfamily. In terms of assembly, interacts with PCNA. Three molecules of FEN1 bind to one PCNA trimer with each molecule binding to one PCNA monomer. PCNA stimulates the nuclease activity without altering cleavage specificity. Mg(2+) is required as a cofactor. Post-translationally, phosphorylated. Phosphorylation upon DNA damage induces relocalization to the nuclear plasma.

It localises to the nucleus. It is found in the nucleolus. The protein resides in the nucleoplasm. The protein localises to the mitochondrion. Its function is as follows. Structure-specific nuclease with 5'-flap endonuclease and 5'-3' exonuclease activities involved in DNA replication and repair. During DNA replication, cleaves the 5'-overhanging flap structure that is generated by displacement synthesis when DNA polymerase encounters the 5'-end of a downstream Okazaki fragment. It enters the flap from the 5'-end and then tracks to cleave the flap base, leaving a nick for ligation. Also involved in the long patch base excision repair (LP-BER) pathway, by cleaving within the apurinic/apyrimidinic (AP) site-terminated flap. Acts as a genome stabilization factor that prevents flaps from equilibrating into structures that lead to duplications and deletions. Also possesses 5'-3' exonuclease activity on nicked or gapped double-stranded DNA, and exhibits RNase H activity. Also involved in replication and repair of rDNA and in repairing mitochondrial DNA. This Leishmania major protein is Flap endonuclease 1.